A 31-amino-acid chain; its full sequence is Dermaseptin-7.2TR (31 aa).

Glutamate 31 carries the glutamic acid 1-amide modification.

In terms of tissue distribution, expressed by the skin glands.

It localises to the secreted. In terms of biological role, has antimicrobial activity. This chain is Dermaseptin-7.2TR, found in Phyllomedusa trinitatis (Trinidad leaf frog).